The primary structure comprises 369 residues: Aminomethyltransferase (369 aa).

It belongs to the GcvT family. The glycine cleavage system is composed of four proteins: P, T, L and H.

It carries out the reaction N(6)-[(R)-S(8)-aminomethyldihydrolipoyl]-L-lysyl-[protein] + (6S)-5,6,7,8-tetrahydrofolate = N(6)-[(R)-dihydrolipoyl]-L-lysyl-[protein] + (6R)-5,10-methylene-5,6,7,8-tetrahydrofolate + NH4(+). Its function is as follows. The glycine cleavage system catalyzes the degradation of glycine. The chain is Aminomethyltransferase from Xanthomonas axonopodis pv. citri (strain 306).